A 161-amino-acid polypeptide reads, in one-letter code: Nucleotide-binding protein Ajs_2750 (161 aa).

It belongs to the YajQ family.

Nucleotide-binding protein. The sequence is that of Nucleotide-binding protein Ajs_2750 from Acidovorax sp. (strain JS42).